Here is a 283-residue protein sequence, read N- to C-terminus: Pantothenate synthetase (283 aa).

30-37 (MGNLHAGH) provides a ligand contact to ATP. H37 serves as the catalytic Proton donor. (R)-pantoate is bound at residue Q61. Q61 contacts beta-alanine. Residue 149–152 (GEKD) participates in ATP binding. Q155 lines the (R)-pantoate pocket. Residues V178 and 186–189 (LSSR) contribute to the ATP site.

It belongs to the pantothenate synthetase family. As to quaternary structure, homodimer.

Its subcellular location is the cytoplasm. It carries out the reaction (R)-pantoate + beta-alanine + ATP = (R)-pantothenate + AMP + diphosphate + H(+). It participates in cofactor biosynthesis; (R)-pantothenate biosynthesis; (R)-pantothenate from (R)-pantoate and beta-alanine: step 1/1. Catalyzes the condensation of pantoate with beta-alanine in an ATP-dependent reaction via a pantoyl-adenylate intermediate. The sequence is that of Pantothenate synthetase from Pseudomonas aeruginosa (strain UCBPP-PA14).